Reading from the N-terminus, the 141-residue chain is HTH-type transcriptional repressor NsrR (141 aa).

Positions 2-129 (QLTSFTDYGL…DSHTLADMVE (128 aa)) constitute an HTH rrf2-type domain. The segment at residues 28–51 (ISEVTEVYGVSRNHMVKIINQLSR) is a DNA-binding region (H-T-H motif). 3 residues coordinate [2Fe-2S] cluster: cysteine 91, cysteine 96, and cysteine 102.

Requires [2Fe-2S] cluster as cofactor.

Its function is as follows. Nitric oxide-sensitive repressor of genes involved in protecting the cell against nitrosative stress. May require iron for activity. The polypeptide is HTH-type transcriptional repressor NsrR (Serratia proteamaculans (strain 568)).